The following is a 470-amino-acid chain: UTP--glucose-1-phosphate uridylyltransferase 1 (470 aa).

An N-acetylalanine modification is found at A2. UTP-binding positions include 86–89 (LNGG), K100, Q163, and G192. 88–89 (GG) lines the substrate pocket. Substrate contacts are provided by residues H193 and 221–223 (NSD). Residues D223 and K361 each coordinate UTP.

It belongs to the UDPGP type 1 family. Expressed in roots, rosette leaves, cauline leaves, stems, flowers and siliques.

The protein resides in the cytoplasm. It carries out the reaction alpha-D-glucose 1-phosphate + UTP + H(+) = UDP-alpha-D-glucose + diphosphate. Converts glucose 1-phosphate to UDP-glucose, which is the major glycosyl donor for polysaccharides. Acts redundantly with UGP2 and is essential for the synthesis of sucrose, starch and cell wall, and callose deposition. Involved in the regulation of the programmed cell death (PCD) induced by the fungal toxin fumonisin B1 (FB1). In Arabidopsis thaliana (Mouse-ear cress), this protein is UTP--glucose-1-phosphate uridylyltransferase 1.